The primary structure comprises 475 residues: Lipoprotein lipase (475 aa).

Residues 1 to 27 form the signal peptide; the sequence is MESKALLLVALGMWFQSLTATRGGVAA. The segment at 32–53 is interaction with GPIHBP1; the sequence is GDFIDIESKFALRTPEDTAEDT. Cysteines 54 and 67 form a disulfide. N-linked (GlcNAc...) asparagine glycosylation is present at asparagine 70. Tyrosine 121 is modified (3'-nitrotyrosine). Serine 159 serves as the catalytic Nucleophile. The active-site Charge relay system is the aspartate 183. Tyrosine 191 bears the 3'-nitrotyrosine mark. Ca(2+)-binding residues include alanine 194, arginine 197, serine 199, and aspartate 202. A disulfide bond links cysteine 243 and cysteine 266. The active-site Charge relay system is the histidine 268. 2 disulfides stabilise this stretch: cysteine 291-cysteine 310 and cysteine 302-cysteine 305. In terms of domain architecture, PLAT spans 341–464; sequence FHYQVKIHFS…KGKASVVFVK (124 aa). Tyrosine 343 carries the post-translational modification 3'-nitrotyrosine. Residue asparagine 386 is glycosylated (N-linked (GlcNAc...) asparagine). An important for interaction with lipoprotein particles region spans residues 417–421; sequence WSDWW. The important for heparin binding stretch occupies residues 430–434; sequence KIRVK. Residues 443 to 467 are interaction with GPIHBP1; sequence IFCSREKVSHLQKGKASVVFVKCHD. A disulfide bond links cysteine 445 and cysteine 465.

It belongs to the AB hydrolase superfamily. Lipase family. As to quaternary structure, homodimer. Interacts with GPIHBP1 with 1:1 stoichiometry. Interacts with APOC2; the interaction activates LPL activity in the presence of lipids. Interaction with heparan sulfate proteoglycans is required to protect LPL against loss of activity. Associates with lipoprotein particles in blood plasma. Interacts with LMF1 and SEL1L; interaction with SEL1L is required to prevent aggregation of newly synthesized LPL in the endoplasmic reticulum (ER), and for normal export of LPL from the ER to the extracellular space. Interacts with SORL1; SORL1 acts as a sorting receptor, promoting LPL localization to endosomes and later to lysosomes, leading to degradation of newly synthesized LPL. Post-translationally, tyrosine nitration after lipopolysaccharide (LPS) challenge down-regulates the lipase activity.

It localises to the cell membrane. Its subcellular location is the secreted. The protein localises to the extracellular space. It is found in the extracellular matrix. The enzyme catalyses a triacylglycerol + H2O = a diacylglycerol + a fatty acid + H(+). The apolipoprotein APOC2 acts as a coactivator of LPL activity. Ca(2+) binding promotes protein stability and formation of the active homodimer. Interaction with GPIHBP1 protects LPL against inactivation by ANGPTL4. Its function is as follows. Key enzyme in triglyceride metabolism. Catalyzes the hydrolysis of triglycerides from circulating chylomicrons and very low density lipoproteins (VLDL), and thereby plays an important role in lipid clearance from the blood stream, lipid utilization and storage. Mediates margination of triglyceride-rich lipoprotein particles in capillaries. Recruited to its site of action on the luminal surface of vascular endothelium by binding to GPIHBP1 and cell surface heparan sulfate proteoglycans. This is Lipoprotein lipase (LPL) from Neovison vison (American mink).